Reading from the N-terminus, the 345-residue chain is NADH-ubiquinone oxidoreductase chain 2 (345 aa).

10 helical membrane passes run 3-23 (PYILSIMLISLGLGTTLTFAS), 25-45 (NWLLAWMGLEINTLAIIPLMA), 59-79 (YFITQAAAAALLLFSSLINAW), 95-115 (ALMTIAIAIKLGVAPVHFWLP), 148-168 (LMPELMIALGLMSTIVGGWGG), 177-196 (IMAYSSIAHLGWIISIMHFM), 201-223 (IINLIMYIIMTTTMFMIFNTLNS), 236-256 (FPALSAITMLALLSLGGLPPL), 273-293 (NLALTATVMALSALLSLYFYL), and 322-342 (FILPTMMIMTIAMLPISPSII).

It belongs to the complex I subunit 2 family.

The protein localises to the mitochondrion inner membrane. It carries out the reaction a ubiquinone + NADH + 5 H(+)(in) = a ubiquinol + NAD(+) + 4 H(+)(out). Core subunit of the mitochondrial membrane respiratory chain NADH dehydrogenase (Complex I) that is believed to belong to the minimal assembly required for catalysis. Complex I functions in the transfer of electrons from NADH to the respiratory chain. The immediate electron acceptor for the enzyme is believed to be ubiquinone. The chain is NADH-ubiquinone oxidoreductase chain 2 (MT-ND2) from Polypterus ornatipinnis (Ornate bichir).